A 633-amino-acid polypeptide reads, in one-letter code: Biosynthetic arginine decarboxylase (633 aa).

Position 101 is an N6-(pyridoxal phosphate)lysine (Lys101). A substrate-binding site is contributed by 284 to 294 (VDVGGGLGVDY).

It belongs to the Orn/Lys/Arg decarboxylase class-II family. SpeA subfamily. It depends on Mg(2+) as a cofactor. The cofactor is pyridoxal 5'-phosphate.

The enzyme catalyses L-arginine + H(+) = agmatine + CO2. It participates in amine and polyamine biosynthesis; agmatine biosynthesis; agmatine from L-arginine: step 1/1. Catalyzes the biosynthesis of agmatine from arginine. The chain is Biosynthetic arginine decarboxylase from Aeromonas hydrophila subsp. hydrophila (strain ATCC 7966 / DSM 30187 / BCRC 13018 / CCUG 14551 / JCM 1027 / KCTC 2358 / NCIMB 9240 / NCTC 8049).